Here is an 82-residue protein sequence, read N- to C-terminus: T-complex protein 1 subunit gamma (82 aa).

Glycine 15 serves as a coordination point for ADP. Glycine 15 is an ATP binding site. Mg(2+) is bound at residue aspartate 66. Positions 67, 68, 69, and 70 each coordinate ADP. ATP-binding residues include glycine 67, threonine 68, and threonine 69.

Belongs to the TCP-1 chaperonin family. Component of the chaperonin-containing T-complex (TRiC), a hexadecamer composed of two identical back-to-back stacked rings enclosing a protein folding chamber. Each ring is made up of eight different subunits: TCP1/CCT1, CCT2, CCT3, CCT4, CCT5, CCT6A/CCT6, CCT7, CCT8. Interacts with PACRG. Interacts with DNAAF4. Interacts with DLEC1.

The protein resides in the cytoplasm. It carries out the reaction ATP + H2O = ADP + phosphate + H(+). Its function is as follows. Component of the chaperonin-containing T-complex (TRiC), a molecular chaperone complex that assists the folding of actin, tubulin and other proteins upon ATP hydrolysis. The TRiC complex mediates the folding of WRAP53/TCAB1, thereby regulating telomere maintenance. As part of the TRiC complex may play a role in the assembly of BBSome, a complex involved in ciliogenesis regulating transports vesicles to the cilia. The polypeptide is T-complex protein 1 subunit gamma (CCT3) (Sus scrofa (Pig)).